A 356-amino-acid chain; its full sequence is UDP-N-acetylglucosamine--N-acetylmuramyl-(pentapeptide) pyrophosphoryl-undecaprenol N-acetylglucosamine transferase (356 aa).

Residues 13–15 (TGG), N125, R161, S189, I243, and Q288 each bind UDP-N-acetyl-alpha-D-glucosamine.

The protein belongs to the glycosyltransferase 28 family. MurG subfamily.

The protein localises to the cell inner membrane. It catalyses the reaction di-trans,octa-cis-undecaprenyl diphospho-N-acetyl-alpha-D-muramoyl-L-alanyl-D-glutamyl-meso-2,6-diaminopimeloyl-D-alanyl-D-alanine + UDP-N-acetyl-alpha-D-glucosamine = di-trans,octa-cis-undecaprenyl diphospho-[N-acetyl-alpha-D-glucosaminyl-(1-&gt;4)]-N-acetyl-alpha-D-muramoyl-L-alanyl-D-glutamyl-meso-2,6-diaminopimeloyl-D-alanyl-D-alanine + UDP + H(+). It functions in the pathway cell wall biogenesis; peptidoglycan biosynthesis. Its function is as follows. Cell wall formation. Catalyzes the transfer of a GlcNAc subunit on undecaprenyl-pyrophosphoryl-MurNAc-pentapeptide (lipid intermediate I) to form undecaprenyl-pyrophosphoryl-MurNAc-(pentapeptide)GlcNAc (lipid intermediate II). The sequence is that of UDP-N-acetylglucosamine--N-acetylmuramyl-(pentapeptide) pyrophosphoryl-undecaprenol N-acetylglucosamine transferase from Cupriavidus metallidurans (strain ATCC 43123 / DSM 2839 / NBRC 102507 / CH34) (Ralstonia metallidurans).